Consider the following 968-residue polypeptide: RNA polymerase-associated protein RapA (968 aa).

The region spanning 164 to 334 (DVGRRHAPRV…FARLRLLDPN (171 aa)) is the Helicase ATP-binding domain. 177–184 (DEVGLGKT) is an ATP binding site. The short motif at 280-283 (DEAH) is the DEAH box element. Positions 490–644 (RVEWLMGYLT…TCPTGRTVYD (155 aa)) constitute a Helicase C-terminal domain.

It belongs to the SNF2/RAD54 helicase family. RapA subfamily. In terms of assembly, interacts with the RNAP. Has a higher affinity for the core RNAP than for the holoenzyme. Its ATPase activity is stimulated by binding to RNAP.

Transcription regulator that activates transcription by stimulating RNA polymerase (RNAP) recycling in case of stress conditions such as supercoiled DNA or high salt concentrations. Probably acts by releasing the RNAP, when it is trapped or immobilized on tightly supercoiled DNA. Does not activate transcription on linear DNA. Probably not involved in DNA repair. This chain is RNA polymerase-associated protein RapA, found in Klebsiella pneumoniae subsp. pneumoniae (strain ATCC 700721 / MGH 78578).